Consider the following 220-residue polypeptide: Charged multivesicular body protein 2a (220 aa).

2 coiled-coil regions span residues 12–53 (EELL…MAKQ) and 198–219 (EATA…NLRR). The disordered stretch occupies residues 196-220 (KGEATAALADADADLEERLNNLRRD). The MIT-interacting motif motif lies at 208-218 (ADLEERLNNLR). The span at 211-220 (EERLNNLRRD) shows a compositional bias: basic and acidic residues.

Belongs to the SNF7 family. As to quaternary structure, probable core component of the endosomal sorting required for transport complex III (ESCRT-III). ESCRT-III components are thought to multimerize to form a flat lattice on the perimeter membrane of the endosome.

Its subcellular location is the late endosome membrane. The protein localises to the cytoplasm. Its function is as follows. Probable core component of the endosomal sorting required for transport complex III (ESCRT-III) which is involved in multivesicular bodies (MVBs) formation and sorting of endosomal cargo proteins into MVBs. MVBs contain intraluminal vesicles (ILVs) that are generated by invagination and scission from the limiting membrane of the endosome and mostly are delivered to lysosomes enabling degradation of membrane proteins, such as stimulated growth factor receptors, lysosomal enzymes and lipids. This Xenopus laevis (African clawed frog) protein is Charged multivesicular body protein 2a (chmp2a).